We begin with the raw amino-acid sequence, 176 residues long: Retinol-binding protein 4-A (176 aa).

Residue Ser-1 is modified to N-acetylserine. 3 disulfides stabilise this stretch: Cys-3–Cys-159, Cys-69–Cys-173, and Cys-119–Cys-128. Gln-97 contacts substrate.

It belongs to the calycin superfamily. Lipocalin family.

The protein localises to the secreted. Functionally, RBP delivers retinol from the liver stores to the peripheral tissues. In plasma, the RBP-retinol complex interacts with transthyretin, this prevents its loss by filtration through the kidney glomeruli. The sequence is that of Retinol-binding protein 4-A (rbp4a) from Oncorhynchus mykiss (Rainbow trout).